A 134-amino-acid chain; its full sequence is ATP synthase epsilon chain, chloroplastic (134 aa).

Belongs to the ATPase epsilon chain family. In terms of assembly, F-type ATPases have 2 components, CF(1) - the catalytic core - and CF(0) - the membrane proton channel. CF(1) has five subunits: alpha(3), beta(3), gamma(1), delta(1), epsilon(1). CF(0) has three main subunits: a, b and c.

It localises to the plastid. The protein localises to the chloroplast thylakoid membrane. In terms of biological role, produces ATP from ADP in the presence of a proton gradient across the membrane. In Amborella trichopoda, this protein is ATP synthase epsilon chain, chloroplastic.